The primary structure comprises 367 residues: sn-glycerol-3-phosphate import ATP-binding protein UgpC (367 aa).

Residues Leu4 to Ile235 enclose the ABC transporter domain. Residue Gly37–Ser44 participates in ATP binding.

The protein belongs to the ABC transporter superfamily. sn-glycerol-3-phosphate importer (TC 3.A.1.1.3) family. As to quaternary structure, the complex is composed of two ATP-binding proteins (UgpC), two transmembrane proteins (UgpA and UgpE) and a solute-binding protein (UgpB).

The protein resides in the cell inner membrane. It catalyses the reaction sn-glycerol 3-phosphate(out) + ATP + H2O = sn-glycerol 3-phosphate(in) + ADP + phosphate + H(+). Its function is as follows. Part of the ABC transporter complex UgpBAEC involved in sn-glycerol-3-phosphate (G3P) import. Responsible for energy coupling to the transport system. The sequence is that of sn-glycerol-3-phosphate import ATP-binding protein UgpC from Cupriavidus metallidurans (strain ATCC 43123 / DSM 2839 / NBRC 102507 / CH34) (Ralstonia metallidurans).